The following is a 444-amino-acid chain: uncharacterized protein (444 aa).

The next 12 helical transmembrane spans lie at 2–22, 24–44, 52–72, 106–126, 134–154, 174–194, 228–248, 261–281, 305–325, 343–363, 377–397, and 424–444; these read PILI…KVKL, TFVS…MDIN, TGIG…AMLG, FIIG…PIVY, MPFL…HGFL, VLLF…PLFN, FAIS…ATIF, IIEF…LALY, IAMM…LIDG, LFVA…ATVA, AGSV…VIAC, and LLTT…GLVM.

This sequence belongs to the GntP permease family.

It localises to the cell membrane. This is an uncharacterized protein from Bacillus subtilis (strain 168).